The primary structure comprises 135 residues: Phosphoinositide-interacting protein (135 aa).

A disordered region spans residues 1 to 21; sequence MEVLPKALEVDERSPESKDLL. A compositionally biased stretch (basic and acidic residues) spans 8 to 19; sequence LEVDERSPESKD. 2 helical membrane-spanning segments follow: residues 54-74 and 92-112; these read IIIM…TCVA and PAFL…VPII.

In terms of assembly, interacts with TRPV1. Strongly expressed in most dorsal root ganglia (DRG) and trigeminal neurons. Expressed by most peptidergic (CGRP+) and non-peptidergic (IB4+) DRG neurons. Weakly expressed in other parts of the peripheral nervous system (PNS) including sympathetic and enteric neurons. Not expressed in the spinal cord.

The protein resides in the membrane. Its function is as follows. Regulatory subunit of TRPV1, a molecular sensor of noxious heat and capsaicin. Positively regulates TRPV1 channel activity via phosphatidylinositol 4,5-bisphosphate (PIP2). Binds various phosphoinositide, including phosphatidylinositol 4,5-bisphosphate (PIP2), but not phosphatidylinositol (PI). In Mus musculus (Mouse), this protein is Phosphoinositide-interacting protein (Pirt).